Here is a 215-residue protein sequence, read N- to C-terminus: Urease accessory protein UreG (215 aa).

24 to 31 (GPVGSGKT) lines the GTP pocket.

This sequence belongs to the SIMIBI class G3E GTPase family. UreG subfamily. Homodimer. UreD, UreF and UreG form a complex that acts as a GTP-hydrolysis-dependent molecular chaperone, activating the urease apoprotein by helping to assemble the nickel containing metallocenter of UreC. The UreE protein probably delivers the nickel.

It is found in the cytoplasm. Its function is as follows. Facilitates the functional incorporation of the urease nickel metallocenter. This process requires GTP hydrolysis, probably effectuated by UreG. The polypeptide is Urease accessory protein UreG (Burkholderia orbicola (strain MC0-3)).